The primary structure comprises 553 residues: Membrane protein insertase YidC (553 aa).

The chain crosses the membrane as a helical span at residues 6–26; it reads LIALVLSLLVLVFWEMYFGLF. The interval 34-59 is disordered; sequence NKTEQAAPTTTQPATPQTVPPQAATP. Residues 38–59 are compositionally biased toward low complexity; it reads QAAPTTTQPATPQTVPPQAATP. Helical transmembrane passes span 331–351, 360–380, 424–444, 477–497, and 512–532; these read LASA…VYVL, NWGV…WPLT, VNPM…FALY, IPYL…MFIQ, and IMMI…SGLV.

Belongs to the OXA1/ALB3/YidC family. Type 1 subfamily. In terms of assembly, interacts with the Sec translocase complex via SecD. Specifically interacts with transmembrane segments of nascent integral membrane proteins during membrane integration.

It is found in the cell inner membrane. In terms of biological role, required for the insertion and/or proper folding and/or complex formation of integral membrane proteins into the membrane. Involved in integration of membrane proteins that insert both dependently and independently of the Sec translocase complex, as well as at least some lipoproteins. Aids folding of multispanning membrane proteins. This Syntrophobacter fumaroxidans (strain DSM 10017 / MPOB) protein is Membrane protein insertase YidC.